We begin with the raw amino-acid sequence, 115 residues long: Non-specific lipid-transfer protein 3 (115 aa).

The signal sequence occupies residues 1–23 (MAFALRFFTCLVLTVCIVASVDA). Intrachain disulfides connect Cys-27-Cys-74, Cys-37-Cys-51, Cys-52-Cys-97, and Cys-72-Cys-111.

Belongs to the plant LTP family.

Functionally, plant non-specific lipid-transfer proteins transfer phospholipids as well as galactolipids across membranes. May play a role in wax or cutin deposition in the cell walls of expanding epidermal cells and certain secretory tissues. In Arabidopsis thaliana (Mouse-ear cress), this protein is Non-specific lipid-transfer protein 3 (LTP3).